The chain runs to 152 residues: Deoxyuridine 5'-triphosphate nucleotidohydrolase (152 aa).

Substrate is bound by residues 71 to 73 (RSG), asparagine 84, 88 to 90 (LID), and methionine 98.

Belongs to the dUTPase family. Mg(2+) is required as a cofactor.

It catalyses the reaction dUTP + H2O = dUMP + diphosphate + H(+). The protein operates within pyrimidine metabolism; dUMP biosynthesis; dUMP from dCTP (dUTP route): step 2/2. This enzyme is involved in nucleotide metabolism: it produces dUMP, the immediate precursor of thymidine nucleotides and it decreases the intracellular concentration of dUTP so that uracil cannot be incorporated into DNA. The protein is Deoxyuridine 5'-triphosphate nucleotidohydrolase of Shewanella pealeana (strain ATCC 700345 / ANG-SQ1).